A 397-amino-acid chain; its full sequence is Phosphoglycerate transport regulatory protein PgtC (397 aa).

The first 24 residues, 1 to 24 (MFGSCQAYSRELVMATTFSPSATA), serve as a signal peptide directing secretion. A helical membrane pass occupies residues 102–117 (TSVAVAVSGFGLLINR).

The protein resides in the cell membrane. Functionally, required for pgtP expression, it may act jointly with the PgtA/PgtB signaling proteins. The polypeptide is Phosphoglycerate transport regulatory protein PgtC (pgtC) (Salmonella typhi).